Reading from the N-terminus, the 455-residue chain is EVQLVETGGGLIQPGGSLRLSCAASGFTVSNHSMSWVRQAPGKALEWVSAIYRGGTTYYADSVKGRFTISRDDSRNTVYLQMNSLRAEDTAVYYCARDLAAARLFGKGTTVTVSSASPTSPKVFPLSLDSTPQDGNVVVACLVQGFFPQEPLSVTWSESGQNVTARNFPPSQDASGDLYTTSSQLTLPATQCPDGKSVTCHVKHYTNSSQDVTVPCRVPPPPPCCHPRLSLHRPALEDLLLGSEANLTCTLTGLRDASGATFTWTPSSGKSAVEGPPERDLCGCYSVSSVLPGCAQPWNHGETFTCTAAHPELKTPLTANITKSGNTFRPEVHLLPPPSEELALNELVTLTCLARGFSPKDVLVRWLQGSQELPREKYLTWASRQEPSQGTTTYAVTSILRVAAEDWKKGETFSCMVGHEALPLAFTQKTIDRLAGKPTHINVSVVMAEADGTCY.

Ig-like domains are found at residues 1-95 (EVQL…VYYC), 121-213 (PKVF…QDVT), 227-322 (PRLS…ANIT), and 330-432 (PEVH…KTID). A variable (V) domain, involved in antigen recognition region spans residues 1–115 (EVQLVETGGG…GKGTTVTVSS (115 aa)). Cystine bridges form between cysteine 22–cysteine 95 and cysteine 141–cysteine 200. The interval 116–455 (ASPTSPKVFP…VMAEADGTCY (340 aa)) is constant (C) domain. N-linked (GlcNAc...) asparagine glycans are attached at residues asparagine 162, asparagine 207, and asparagine 246. 2 cysteine pairs are disulfide-bonded: cysteine 225-cysteine 282 and cysteine 249-cysteine 306. Asparagine 320 is a glycosylation site (N-linked (GlcNAc...) asparagine). Cysteine 352 and cysteine 415 are joined by a disulfide. N-linked (GlcNAc...) asparagine glycosylation occurs at asparagine 442.

Immunoglobulins are composed of two identical heavy chains and two identical light chains; disulfide-linked. Monomeric or polymeric.

The protein resides in the secreted. The protein localises to the cell membrane. Immunoglobulins, also known as antibodies, are membrane-bound or secreted glycoproteins produced by B lymphocytes. In the recognition phase of humoral immunity, the membrane-bound immunoglobulins serve as receptors which, upon binding of a specific antigen, trigger the clonal expansion and differentiation of B lymphocytes into immunoglobulins-secreting plasma cells. Secreted immunoglobulins mediate the effector phase of humoral immunity, which results in the elimination of bound antigens. The antigen binding site is formed by the variable domain of one heavy chain, together with that of its associated light chain. Thus, each immunoglobulin has two antigen binding sites with remarkable affinity for a particular antigen. The variable domains are assembled by a process called V-(D)-J rearrangement and can then be subjected to somatic hypermutations which, after exposure to antigen and selection, allow affinity maturation for a particular antigen. Ig alpha is the major immunoglobulin class in body secretions. The chain is Immunoglobulin alpha-2 heavy chain from Homo sapiens (Human).